Reading from the N-terminus, the 372-residue chain is Cyclin-dependent kinase 9 (372 aa).

In terms of domain architecture, Protein kinase spans 19–315 (YEKLAKIGQG…SDDALNHDFF (297 aa)). 25–33 (IGQGTFGEV) is a binding site for ATP. The residue at position 35 (lysine 35) is a Phosphoserine. Lysine 44 carries the N6-acetyllysine; by EP300/CBP, PCAF/KAT2B and GCN5/KAT2A modification. Lysine 48 contacts ATP. Lysine 48 carries the post-translational modification N6-acetyllysine; by PCAF/KAT2B and GCN5/KAT2A. Asparagine 54 carries the phosphothreonine modification. ATP is bound at residue 104 to 106 (DFC). Aspartate 149 functions as the Proton acceptor in the catalytic mechanism. Positions 166 to 191 (ADFGLARAFSLAKNSQPNRYTNRVVT) are T-loop. Residue aspartate 167 participates in ATP binding. Phosphoserine is present on serine 175. The residue at position 186 (threonine 186) is a Phosphothreonine; by CaMK1D. The interval 343-372 (RRKGSQITQQSTNQSRNPATTNQTEFERVF) is disordered. Residue serine 347 is modified to Phosphoserine; by CDK9 and PKA. A compositionally biased stretch (polar residues) spans 347–366 (SQITQQSTNQSRNPATTNQT). Threonine 350 bears the Phosphothreonine; by CDK9 mark. Serine 353 is modified (phosphoserine; by CDK9). At threonine 354 the chain carries Phosphothreonine; by CDK9. Serine 357 carries the phosphoserine; by CDK9 modification. A phosphothreonine; by CDK9 mark is found at threonine 362 and threonine 363.

The protein belongs to the protein kinase superfamily. CMGC Ser/Thr protein kinase family. CDC2/CDKX subfamily. In terms of assembly, component of the super elongation complex (SEC), at least composed of EAF1, EAF2, CDK9, MLLT3/AF9, AFF (AFF1 or AFF4), the P-TEFb complex and ELL (ELL, ELL2 or ELL3). Associates with CCNT1/cyclin-T1, CCNT2/cyclin-T2 (isoform A and isoform B) or CCNK/cyclin-K to form active P-TEFb. P-TEFb forms a complex with AFF4/AF5Q31 and is part of the super elongation complex (SEC). Component of a complex which is composed of at least 5 members: HTATSF1/Tat-SF1, P-TEFb complex, RNA pol II, SUPT5H and NCL/nucleolin. Associates with UBR5 and forms a transcription regulatory complex composed of CDK9, RNAP II, UBR5 and TFIIS/TCEA1 that can stimulate target gene transcription (e.g. gamma fibrinogen/FGG) by recruiting their promoters. Component of the 7SK snRNP inactive complex which is composed of at least 8 members: P-TEFb (composed of CDK9 and CCNT1/cyclin-T1), HEXIM1, HEXIM2, LARP7, BCDIN3, SART3 proteins and 7SK and U6 snRNAs. This inactive 7SK snRNP complex can also interact with NCOR1 and HDAC3, probably to regulate CDK9 acetylation. Release of P-TEFb from P-TEFb/7SK snRNP complex requires both PP2B to transduce calcium Ca(2+) signaling in response to stimuli (e.g. UV or hexamethylene bisacetamide (HMBA)) and PPP1CA to dephosphorylate Thr-186. This released P-TEFb remains inactive in the pre-initiation complex with BRD4 until new Thr-186 phosphorylation occurs after the synthesis of a short RNA. Interacts with BRD4; to target chromatin binding. Interacts with JMJD6. Interacts with activated nuclear STAT3 and RELA/p65. Binds to AR and MYOD1. Forms a complex composed of CDK9, CCNT1/cyclin-T1, EP300 and GATA4 that stimulates hypertrophy in cardiomyocytes. The large PER complex involved in the repression of transcriptional termination is composed of at least PER2, CDK9, DDX5, DHX9, NCBP1 and POLR2A. Interacts with HSF1. Interacts with TBX21. Isoform 3: binds to KU70/XRCC6. Interacts with WDR43. Interacts with ZMYND8; the association appears to occur between homodimeric ZMYND8 and the activated form of the P-TEFb complex. As to quaternary structure, (Microbial infection) Interacts with the acidic/proline-rich region of HIV-1 and HIV-2 Tat via T-loop region and is thus required for HIV to hijack host transcription machinery during its replication through cooperative binding to viral TAR RNA. (Microbial infection) Interacts with human herpes virus 1 (HHV-1) protein ICP22; this interaction blocks the recruitment of positive transcription elongation factor b (P-TEFb) to the viral promoter. In terms of processing, autophosphorylation at Thr-186, Ser-347, Thr-350, Ser-353, Thr-354 and Ser-357 triggers kinase activity by promoting cyclin and substrate binding (e.g. HIV TAT) upon conformational changes. Thr-186 phosphorylation requires the calcium Ca(2+) signaling pathway, including CaMK1D and calmodulin. This inhibition is relieved by Thr-29 dephosphorylation. However, phosphorylation at Thr-29 is inhibitory within the HIV transcription initiation complex. Phosphorylation at Ser-175 inhibits kinase activity. Can be phosphorylated on either Thr-362 or Thr-363 but not on both simultaneously. Dephosphorylation of Thr-186 by PPM1A and PPM1B blocks CDK9 activity and may lead to CDK9 proteasomal degradation. However, PPP1CA-mediated Thr-186 dephosphorylation is required to release P-TEFb from its inactive P-TEFb/7SK snRNP complex. Dephosphorylated at Ser-347 by the PNUTS-PP1 complex during RNA polymerase II transcription pause-release. Dephosphorylation of C-terminus Thr and Ser residues by protein phosphatase-1 (PP1) triggers CDK9 activity, contributing to the activation of HIV-1 transcription. Post-translationally, N6-acetylation of Lys-44 promotes kinase activity, whereas acetylation of both Lys-44 and Lys-48 mediated by PCAF/KAT2B and GCN5/KAT2A reduces kinase activity. The acetylated form associates with PML bodies in the nuclear matrix and with the transcriptionally silent HIV-1 genome; deacetylated upon transcription stimulation. Deacetylated by SIRT7, promoting the kinase activity and subsequent 'Ser-2' phosphorylation of the C-terminal domain (CTD) of RNA polymerase II. In terms of processing, polyubiquitinated and thus activated by UBR5. This ubiquitination is promoted by TFIIS/TCEA1 and favors 'Ser-2' phosphorylation of RPB1/POLR2A CTD. As to expression, ubiquitous.

The protein resides in the nucleus. It is found in the cytoplasm. The protein localises to the PML body. The enzyme catalyses L-seryl-[protein] + ATP = O-phospho-L-seryl-[protein] + ADP + H(+). It catalyses the reaction L-threonyl-[protein] + ATP = O-phospho-L-threonyl-[protein] + ADP + H(+). It carries out the reaction [DNA-directed RNA polymerase] + ATP = phospho-[DNA-directed RNA polymerase] + ADP + H(+). Its activity is regulated as follows. Inhibited by CDKI-71, CR8, GPC-286199, AG-024322, flavopiridol (alvocidib), RBG-286147, anilinopyrimidine 32, arylazopyrazole 31b, indirubin 3'-monoxime, meriolin 3,P276-00, olomoucine II, pyrazolotriazine, meriolin, variolin, thiazolyl-pyrimidine, thiazolyl-pyrimidine, indirubin-30-monoxime, ZK 304709, AG-012986, AT7519, R547, RGB-286638, imidazole pyrimidine, EXEL-3700, EXEL-8647, 5,6-dichloro-1-b-ribofur-anosyl-benzimidazole (DRB), P276-00, roscovitine (seliciclib, CYC202) and SNS-032 (BMS-387032). Activation by Thr-186 phosphorylation is calcium Ca(2+) signaling pathway-dependent; actively inactivated by dephosphorylation mediated by PPP1CA, PPM1A and PPM1B. Reversibly repressed by acetylation at Lys-44 and Lys-48. Protein kinase involved in the regulation of transcription. Member of the cyclin-dependent kinase pair (CDK9/cyclin-T) complex, also called positive transcription elongation factor b (P-TEFb), which facilitates the transition from abortive to productive elongation by phosphorylating the CTD (C-terminal domain) of the large subunit of RNA polymerase II (RNAP II) POLR2A, SUPT5H and RDBP. This complex is inactive when in the 7SK snRNP complex form. Phosphorylates EP300, MYOD1, RPB1/POLR2A and AR and the negative elongation factors DSIF and NELFE. Regulates cytokine inducible transcription networks by facilitating promoter recognition of target transcription factors (e.g. TNF-inducible RELA/p65 activation and IL-6-inducible STAT3 signaling). Promotes RNA synthesis in genetic programs for cell growth, differentiation and viral pathogenesis. P-TEFb is also involved in cotranscriptional histone modification, mRNA processing and mRNA export. Modulates a complex network of chromatin modifications including histone H2B monoubiquitination (H2Bub1), H3 lysine 4 trimethylation (H3K4me3) and H3K36me3; integrates phosphorylation during transcription with chromatin modifications to control co-transcriptional histone mRNA processing. The CDK9/cyclin-K complex has also a kinase activity towards CTD of RNAP II and can substitute for CDK9/cyclin-T P-TEFb in vitro. Replication stress response protein; the CDK9/cyclin-K complex is required for genome integrity maintenance, by promoting cell cycle recovery from replication arrest and limiting single-stranded DNA amount in response to replication stress, thus reducing the breakdown of stalled replication forks and avoiding DNA damage. In addition, probable function in DNA repair of isoform 2 via interaction with KU70/XRCC6. Promotes cardiac myocyte enlargement. RPB1/POLR2A phosphorylation on 'Ser-2' in CTD activates transcription. AR phosphorylation modulates AR transcription factor promoter selectivity and cell growth. DSIF and NELF phosphorylation promotes transcription by inhibiting their negative effect. The phosphorylation of MYOD1 enhances its transcriptional activity and thus promotes muscle differentiation. Catalyzes phosphorylation of KAT5, promoting KAT5 recruitment to chromatin and histone acetyltransferase activity. The chain is Cyclin-dependent kinase 9 from Homo sapiens (Human).